A 309-amino-acid chain; its full sequence is Glutaminase (309 aa).

Substrate contacts are provided by Ser64, Asn114, Glu160, Asn167, Tyr191, Tyr243, and Val261.

This sequence belongs to the glutaminase family. In terms of assembly, homotetramer.

The enzyme catalyses L-glutamine + H2O = L-glutamate + NH4(+). This Methylorubrum populi (strain ATCC BAA-705 / NCIMB 13946 / BJ001) (Methylobacterium populi) protein is Glutaminase.